We begin with the raw amino-acid sequence, 238 residues long: Alpha-tubulin N-acetyltransferase (238 aa).

The 196-residue stretch at 1-196 (MEFDFDISQS…NNFVVFEDLF (196 aa)) folds into the N-acetyltransferase domain. Residues 129–142 (FYVH…GNGK) and 165–174 (SFKFLSFLQK) contribute to the acetyl-CoA site.

Belongs to the acetyltransferase ATAT1 family.

It catalyses the reaction L-lysyl-[alpha-tubulin] + acetyl-CoA = N(6)-acetyl-L-lysyl-[alpha-tubulin] + CoA + H(+). In terms of biological role, specifically acetylates 'Lys-40' in alpha-tubulin on the lumenal side of microtubules. Promotes microtubule destabilization and accelerates microtubule dynamics; this activity may be independent of acetylation activity. Acetylates alpha-tubulin with a slow enzymatic rate, due to a catalytic site that is not optimized for acetyl transfer. Enters the microtubule through each end and diffuses quickly throughout the lumen of microtubules. Acetylates only long/old microtubules because of its slow acetylation rate since it does not have time to act on dynamically unstable microtubules before the enzyme is released. This chain is Alpha-tubulin N-acetyltransferase, found in Trichoplax adhaerens (Trichoplax reptans).